The following is a 393-amino-acid chain: Serpin-Z4 (393 aa).

The segment at 342–366 (GTEAAAVSVASMTKDMLLMGDFVAD) is RCL.

This sequence belongs to the serpin family.

Probable serine protease inhibitor. This is Serpin-Z4 from Arabidopsis thaliana (Mouse-ear cress).